The following is a 122-amino-acid chain: Large ribosomal subunit protein uL14 (122 aa).

The protein belongs to the universal ribosomal protein uL14 family. Part of the 50S ribosomal subunit. Forms a cluster with proteins L3 and L19. In the 70S ribosome, L14 and L19 interact and together make contacts with the 16S rRNA in bridges B5 and B8.

Functionally, binds to 23S rRNA. Forms part of two intersubunit bridges in the 70S ribosome. In Shewanella denitrificans (strain OS217 / ATCC BAA-1090 / DSM 15013), this protein is Large ribosomal subunit protein uL14.